The chain runs to 191 residues: Fe/S biogenesis protein NfuA (191 aa).

Residues C149 and C152 each coordinate [4Fe-4S] cluster.

Belongs to the NfuA family. In terms of assembly, homodimer. [4Fe-4S] cluster serves as cofactor.

Its function is as follows. Involved in iron-sulfur cluster biogenesis. Binds a 4Fe-4S cluster, can transfer this cluster to apoproteins, and thereby intervenes in the maturation of Fe/S proteins. Could also act as a scaffold/chaperone for damaged Fe/S proteins. In Hamiltonella defensa subsp. Acyrthosiphon pisum (strain 5AT), this protein is Fe/S biogenesis protein NfuA.